Consider the following 290-residue polypeptide: Shikimate dehydrogenase (NADP(+)) (290 aa).

Shikimate contacts are provided by residues 24–26 and T71; that span reads SKS. The Proton acceptor role is filled by K75. Positions 96 and 111 each coordinate shikimate. Residues 135–139, 159–164, and I228 each bind NADP(+); these read GAGGA and NRTKQR. Y230 is a binding site for shikimate. G251 contributes to the NADP(+) binding site.

Belongs to the shikimate dehydrogenase family. As to quaternary structure, homodimer.

The enzyme catalyses shikimate + NADP(+) = 3-dehydroshikimate + NADPH + H(+). It participates in metabolic intermediate biosynthesis; chorismate biosynthesis; chorismate from D-erythrose 4-phosphate and phosphoenolpyruvate: step 4/7. Functionally, involved in the biosynthesis of the chorismate, which leads to the biosynthesis of aromatic amino acids. Catalyzes the reversible NADPH linked reduction of 3-dehydroshikimate (DHSA) to yield shikimate (SA). The sequence is that of Shikimate dehydrogenase (NADP(+)) from Bartonella tribocorum (strain CIP 105476 / IBS 506).